The following is a 439-amino-acid chain: Tryptophan synthase beta chain 2 (439 aa).

Lys-99 is modified (N6-(pyridoxal phosphate)lysine).

This sequence belongs to the TrpB family. As to quaternary structure, tetramer of two alpha and two beta chains. The cofactor is pyridoxal 5'-phosphate.

It catalyses the reaction (1S,2R)-1-C-(indol-3-yl)glycerol 3-phosphate + L-serine = D-glyceraldehyde 3-phosphate + L-tryptophan + H2O. Its pathway is amino-acid biosynthesis; L-tryptophan biosynthesis; L-tryptophan from chorismate: step 5/5. Functionally, the beta subunit is responsible for the synthesis of L-tryptophan from indole and L-serine. The chain is Tryptophan synthase beta chain 2 (trpB2) from Corynebacterium efficiens (strain DSM 44549 / YS-314 / AJ 12310 / JCM 11189 / NBRC 100395).